Consider the following 37-residue polypeptide: Large ribosomal subunit protein bL36c (37 aa).

It belongs to the bacterial ribosomal protein bL36 family.

Its subcellular location is the plastid. It is found in the chloroplast. In Tetradesmus obliquus (Green alga), this protein is Large ribosomal subunit protein bL36c.